A 1101-amino-acid polypeptide reads, in one-letter code: Helicase POLQ-like (1101 aa).

The disordered stretch occupies residues 212 to 261; sequence DLGDHSMKERDWKSSSHNTVNEELPHNCIEQPQQNDESSSKVRTSSDMNR. The segment covering 213 to 225 has biased composition (basic and acidic residues); the sequence is LGDHSMKERDWKS. The segment covering 241-258 has biased composition (polar residues); that stretch reads EQPQQNDESSSKVRTSSD. The Helicase ATP-binding domain maps to 346 to 518; sequence LNSVQERKNL…FLQAEYYTSQ (173 aa). 359–366 is a binding site for ATP; it reads LPTSGGKT. Residues 463–466 carry the DEAH box motif; sequence DELH. Residues 566 to 758 form the Helicase C-terminal domain; it reads HLVALVTEVI…EFTKGIQTLF (193 aa).

This sequence belongs to the helicase family. SKI2 subfamily. Homodimer. Interacts with POLN. Interacts with RAD51B and RAD51C; promoting association with the BCDX2 complex. Interacts with the replication protein A (RPA/RP-A) complex. Interacts with RAD51; stimulating HELQ DNA helicase activity and ability to unwing DNA.

It is found in the nucleus. The protein resides in the chromosome. It catalyses the reaction Couples ATP hydrolysis with the unwinding of duplex DNA by translocating in the 3'-5' direction.. The enzyme catalyses ATP + H2O = ADP + phosphate + H(+). Its activity is regulated as follows. ATPase activity is strongly stimulated by single-stranded DNA. Presence of ATP and Mg cofactor are required for helicase activity allowing to unwind duplex oligonucleotides up to 60-70-mer. This helicase activity is stimulated by replication protein A (RPA/RP-A) complex that binds to unwound regions and inhibits re-annealing. Single-stranded 3'-5' DNA helicase that plays a key role in homology-driven double-strand break (DSB) repair. Involved in different DSB repair mechanisms that are guided by annealing of extensive stretches of complementary bases at break ends, such as microhomology-mediated end-joining (MMEJ), single-strand annealing (SSA) or synthesis-dependent strand annealing (SDSA). Possesses both DNA unwinding and annealing activities. Forms a complex with RAD51, stimulating HELQ DNA helicase activity and ability to unwing DNA. Efficiently unwinds substrates containing 3' overhangs or a D-loop. In contrast, interaction with the replication protein A (RPA/RP-A) complex inhibits DNA unwinding by HELQ but strongly stimulates DNA strand annealing. Triggers displacement of RPA from single-stranded DNA to facilitate annealing of complementary sequences. The sequence is that of Helicase POLQ-like from Homo sapiens (Human).